The following is a 372-amino-acid chain: sn-glycerol-3-phosphate import ATP-binding protein UgpC (372 aa).

The ABC transporter domain maps to 2–233 (LDIQQLVKTY…PASTFVASFI (232 aa)). 35–42 (GPSGCGKS) contributes to the ATP binding site.

This sequence belongs to the ABC transporter superfamily. sn-glycerol-3-phosphate importer (TC 3.A.1.1.3) family. As to quaternary structure, the complex is composed of two ATP-binding proteins (UgpC), two transmembrane proteins (UgpA and UgpE) and a solute-binding protein (UgpB).

The protein localises to the cell inner membrane. It carries out the reaction sn-glycerol 3-phosphate(out) + ATP + H2O = sn-glycerol 3-phosphate(in) + ADP + phosphate + H(+). In terms of biological role, part of the ABC transporter complex UgpBAEC involved in sn-glycerol-3-phosphate (G3P) import. Responsible for energy coupling to the transport system. The polypeptide is sn-glycerol-3-phosphate import ATP-binding protein UgpC (Vibrio vulnificus (strain CMCP6)).